A 68-amino-acid chain; its full sequence is Small cysteine-rich protein 2 (68 aa).

An N-terminal signal peptide occupies residues 1–24 (MAVKFHLCLLLIILVGMGAHVAFA).

The protein belongs to the Cnidaria small cysteine-rich protein (SCRiP) family. gamma subfamily. Contains 4 disulfide bonds.

It is found in the secreted. It localises to the nematocyst. In terms of biological role, induces neurotoxic symptoms on zebrafish. Has also been claimed to be implied in calcification, but tests on homolog proteins suggest that proteins of this family have a neurotoxic function and not a calcification function. This chain is Small cysteine-rich protein 2, found in Orbicella faveolata (Mountainous star coral).